A 60-amino-acid chain; its full sequence is Mastoparan-VT3 (60 aa).

A signal peptide spans 1–27; sequence MKNTILILFTAFIALLGFFGMSAEALA. AXPX repeat units follow at residues 27–30, 31–34, 35–38, and 41–44; these read ADPK, ADPL, AGPN, and ADPE. The propeptide occupies 28 to 45; sequence DPKADPLAGPNPDADPEA. Position 59 is a leucine amide (leucine 59).

The protein belongs to the MCD family. Mastoparan subfamily. Expressed by the venom gland.

It is found in the secreted. Its function is as follows. The synthetic peptide shows antimicrobial activities against Gram-negative bacteria (but not against all strains tested), Gram-positive bacteria (all strains tested) and the fungi C.albicans and C.parapsilosis. Exhibits moderate hemolytic activity (25% at 100 ug/ml) against washed human erythrocytes. The sequence is that of Mastoparan-VT3 from Vespa tropica (Greater banded hornet).